Here is a 496-residue protein sequence, read N- to C-terminus: MNQYILAIDQGTTSSRAILFNQKGEIVHMAQKEFTQYFPQPGWVEHNANEIWGSVLAVIASVLSEAQVKPEQVAAIGITNQRETTVVWEKDTGNPIYNAIVWQSRQTAGICDELKAKGYDPLFREKTGLLIDAYFSGTKVKWILDHVEGARERAERGELLFGTIDTWLIWKLSGGRAHVTDYSNASRTLMFNIHTLEWDDELLDILGVPKAMLPEVRPSSEVYAKTAPYHFFGVEVPIAGAAGDQQAALFGQACFTEGMAKNTYGTGCFMLMNTGEKAVASKHGLLTTIAWGIDGKVEYALEGSIFVAGSAIQWLRDGLRMIKTAADSEAYAEKVESTDGVYVVPAFVGLGTPYWDSEVRGAVFGLTRGTTKEHFIRATLESLAYQTKDVLAAMEADSGISLTTLRVDGGAVKNNFLMQFQSDLLAVPVERPVVNETTALGAAYLAGLAVGYWNSRDDIAAQWQLERRFEPKMDDDKRTMLYDGWKKAVRAAMAFK.

An ADP-binding site is contributed by threonine 12. Positions 12, 13, and 14 each coordinate ATP. Threonine 12 lines the sn-glycerol 3-phosphate pocket. Position 16 (arginine 16) interacts with ADP. 3 residues coordinate sn-glycerol 3-phosphate: arginine 82, glutamate 83, and tyrosine 134. Arginine 82, glutamate 83, and tyrosine 134 together coordinate glycerol. Histidine 230 carries the post-translational modification Phosphohistidine; by HPr. Aspartate 244 is a sn-glycerol 3-phosphate binding site. Glycerol-binding residues include aspartate 244 and glutamine 245. ADP is bound by residues threonine 266 and glycine 309. 4 residues coordinate ATP: threonine 266, glycine 309, glutamine 313, and glycine 410. ADP is bound by residues glycine 410 and asparagine 414.

It belongs to the FGGY kinase family. In terms of assembly, homotetramer and homodimer (in equilibrium). In terms of processing, the phosphoenolpyruvate-dependent sugar phosphotransferase system (PTS), including enzyme I, and histidine-containing protein (HPr) are required for the phosphorylation, which leads to the activation of the enzyme.

The catalysed reaction is glycerol + ATP = sn-glycerol 3-phosphate + ADP + H(+). Its pathway is polyol metabolism; glycerol degradation via glycerol kinase pathway; sn-glycerol 3-phosphate from glycerol: step 1/1. Activated by phosphorylation and inhibited by fructose 1,6-bisphosphate (FBP). Key enzyme in the regulation of glycerol uptake and metabolism. Catalyzes the phosphorylation of glycerol to yield sn-glycerol 3-phosphate. This is Glycerol kinase from Geobacillus kaustophilus (strain HTA426).